Reading from the N-terminus, the 227-residue chain is 2,3-bisphosphoglycerate-dependent phosphoglycerate mutase (227 aa).

Residues 7 to 14, 20 to 21, R59, 86 to 89, K97, 113 to 114, and 182 to 183 contribute to the substrate site; these read RHGFSEWN, TG, ERHY, RR, and GN. H8 (tele-phosphohistidine intermediate) is an active-site residue. Residue E86 is the Proton donor/acceptor of the active site.

This sequence belongs to the phosphoglycerate mutase family. BPG-dependent PGAM subfamily. Homodimer.

The enzyme catalyses (2R)-2-phosphoglycerate = (2R)-3-phosphoglycerate. Its pathway is carbohydrate degradation; glycolysis; pyruvate from D-glyceraldehyde 3-phosphate: step 3/5. Catalyzes the interconversion of 2-phosphoglycerate and 3-phosphoglycerate. The chain is 2,3-bisphosphoglycerate-dependent phosphoglycerate mutase from Histophilus somni (strain 129Pt) (Haemophilus somnus).